The chain runs to 136 residues: ATP synthase epsilon chain (136 aa).

The protein belongs to the ATPase epsilon chain family. In terms of assembly, F-type ATPases have 2 components, CF(1) - the catalytic core - and CF(0) - the membrane proton channel. CF(1) has five subunits: alpha(3), beta(3), gamma(1), delta(1), epsilon(1). CF(0) has three main subunits: a, b and c.

It localises to the cell inner membrane. In terms of biological role, produces ATP from ADP in the presence of a proton gradient across the membrane. The protein is ATP synthase epsilon chain of Hydrogenobaculum sp. (strain Y04AAS1).